A 571-amino-acid polypeptide reads, in one-letter code: DNA primase (571 aa).

The CHC2-type zinc-finger motif lies at 20 to 44 (CPFHKEKTPSFQVDTEKGYYHCFGC). The region spanning 229–309 (AELVVVEGYM…KFRVRATSVP (81 aa)) is the Toprim domain. Residues Glu-235, Asp-280, and Asp-282 each coordinate Mg(2+).

This sequence belongs to the DnaG primase family. As to quaternary structure, monomer. Interacts with DnaB. It depends on Zn(2+) as a cofactor. The cofactor is Mg(2+).

The catalysed reaction is ssDNA + n NTP = ssDNA/pppN(pN)n-1 hybrid + (n-1) diphosphate.. Functionally, RNA polymerase that catalyzes the synthesis of short RNA molecules used as primers for DNA polymerase during DNA replication. This chain is DNA primase, found in Deinococcus radiodurans (strain ATCC 13939 / DSM 20539 / JCM 16871 / CCUG 27074 / LMG 4051 / NBRC 15346 / NCIMB 9279 / VKM B-1422 / R1).